The following is a 391-amino-acid chain: 3-ketoacyl-CoA thiolase (391 aa).

The active-site Acyl-thioester intermediate is the Cys95. Active-site proton acceptor residues include His347 and Cys377.

This sequence belongs to the thiolase-like superfamily. Thiolase family. As to quaternary structure, heterotetramer of two alpha chains (FadB) and two beta chains (FadA).

Its subcellular location is the cytoplasm. The catalysed reaction is an acyl-CoA + acetyl-CoA = a 3-oxoacyl-CoA + CoA. It functions in the pathway lipid metabolism; fatty acid beta-oxidation. Its function is as follows. Catalyzes the final step of fatty acid oxidation in which acetyl-CoA is released and the CoA ester of a fatty acid two carbons shorter is formed. This chain is 3-ketoacyl-CoA thiolase, found in Pseudomonas putida (strain ATCC 47054 / DSM 6125 / CFBP 8728 / NCIMB 11950 / KT2440).